We begin with the raw amino-acid sequence, 157 residues long: Cyclic pyranopterin monophosphate synthase (157 aa).

Residues 74–76 (MCH) and 112–113 (ME) contribute to the substrate site. Residue aspartate 127 is part of the active site.

Belongs to the MoaC family. As to quaternary structure, homohexamer; trimer of dimers.

It carries out the reaction (8S)-3',8-cyclo-7,8-dihydroguanosine 5'-triphosphate = cyclic pyranopterin phosphate + diphosphate. It participates in cofactor biosynthesis; molybdopterin biosynthesis. Its function is as follows. Catalyzes the conversion of (8S)-3',8-cyclo-7,8-dihydroguanosine 5'-triphosphate to cyclic pyranopterin monophosphate (cPMP). This is Cyclic pyranopterin monophosphate synthase from Campylobacter lari (strain RM2100 / D67 / ATCC BAA-1060).